We begin with the raw amino-acid sequence, 518 residues long: Bifunctional purine biosynthesis protein PurH (518 aa).

The MGS-like domain occupies 1–144 (MSKRALISVS…KNHAAVTVVC (144 aa)).

The protein belongs to the PurH family.

It carries out the reaction (6R)-10-formyltetrahydrofolate + 5-amino-1-(5-phospho-beta-D-ribosyl)imidazole-4-carboxamide = 5-formamido-1-(5-phospho-D-ribosyl)imidazole-4-carboxamide + (6S)-5,6,7,8-tetrahydrofolate. The catalysed reaction is IMP + H2O = 5-formamido-1-(5-phospho-D-ribosyl)imidazole-4-carboxamide. The protein operates within purine metabolism; IMP biosynthesis via de novo pathway; 5-formamido-1-(5-phospho-D-ribosyl)imidazole-4-carboxamide from 5-amino-1-(5-phospho-D-ribosyl)imidazole-4-carboxamide (10-formyl THF route): step 1/1. Its pathway is purine metabolism; IMP biosynthesis via de novo pathway; IMP from 5-formamido-1-(5-phospho-D-ribosyl)imidazole-4-carboxamide: step 1/1. The polypeptide is Bifunctional purine biosynthesis protein PurH (Lactococcus lactis subsp. cremoris (strain SK11)).